The following is an 88-amino-acid chain: UPF0335 protein WD_0557 (88 aa).

This sequence belongs to the UPF0335 family.

This is UPF0335 protein WD_0557 from Wolbachia pipientis wMel.